We begin with the raw amino-acid sequence, 85 residues long: Small ribosomal subunit protein eS21 (85 aa).

Belongs to the eukaryotic ribosomal protein eS21 family. As to quaternary structure, component of the 40S small ribosomal subunit.

The protein localises to the cytoplasm. It is found in the cytosol. The protein resides in the rough endoplasmic reticulum. The protein is Small ribosomal subunit protein eS21 (rps-21) of Pectinaria gouldii (Trumpet worm).